The following is a 445-amino-acid chain: Exodeoxyribonuclease 7 large subunit (445 aa).

The protein belongs to the XseA family. In terms of assembly, heterooligomer composed of large and small subunits.

It localises to the cytoplasm. It catalyses the reaction Exonucleolytic cleavage in either 5'- to 3'- or 3'- to 5'-direction to yield nucleoside 5'-phosphates.. Its function is as follows. Bidirectionally degrades single-stranded DNA into large acid-insoluble oligonucleotides, which are then degraded further into small acid-soluble oligonucleotides. This chain is Exodeoxyribonuclease 7 large subunit, found in Xanthomonas euvesicatoria pv. vesicatoria (strain 85-10) (Xanthomonas campestris pv. vesicatoria).